The following is a 336-amino-acid chain: Protein SphX (336 aa).

Positions 1-27 (MFDLSRLSRGIVPMALLLLGISACTPS) are cleaved as a signal peptide.

It belongs to the PstS family.

May be involved in the system for phosphate transport across the cytoplasmic membrane. This Synechocystis sp. (strain ATCC 27184 / PCC 6803 / Kazusa) protein is Protein SphX (sphX).